The chain runs to 100 residues: Urease subunit gamma (100 aa).

The protein belongs to the urease gamma subunit family. As to quaternary structure, heterotrimer of UreA (gamma), UreB (beta) and UreC (alpha) subunits. Three heterotrimers associate to form the active enzyme.

Its subcellular location is the cytoplasm. The enzyme catalyses urea + 2 H2O + H(+) = hydrogencarbonate + 2 NH4(+). It functions in the pathway nitrogen metabolism; urea degradation; CO(2) and NH(3) from urea (urease route): step 1/1. This chain is Urease subunit gamma, found in Alkalilimnicola ehrlichii (strain ATCC BAA-1101 / DSM 17681 / MLHE-1).